The sequence spans 509 residues: Bifunctional purine biosynthesis protein PurH (509 aa).

Residues 1–144 enclose the MGS-like domain; the sequence is MKRALLSVSD…KNARDVIVVV (144 aa).

It belongs to the PurH family.

The catalysed reaction is (6R)-10-formyltetrahydrofolate + 5-amino-1-(5-phospho-beta-D-ribosyl)imidazole-4-carboxamide = 5-formamido-1-(5-phospho-D-ribosyl)imidazole-4-carboxamide + (6S)-5,6,7,8-tetrahydrofolate. It catalyses the reaction IMP + H2O = 5-formamido-1-(5-phospho-D-ribosyl)imidazole-4-carboxamide. The protein operates within purine metabolism; IMP biosynthesis via de novo pathway; 5-formamido-1-(5-phospho-D-ribosyl)imidazole-4-carboxamide from 5-amino-1-(5-phospho-D-ribosyl)imidazole-4-carboxamide (10-formyl THF route): step 1/1. Its pathway is purine metabolism; IMP biosynthesis via de novo pathway; IMP from 5-formamido-1-(5-phospho-D-ribosyl)imidazole-4-carboxamide: step 1/1. This is Bifunctional purine biosynthesis protein PurH from Oenococcus oeni (strain ATCC BAA-331 / PSU-1).